The sequence spans 178 residues: ATP-dependent protease subunit HslV (178 aa).

The active site involves T7. Na(+)-binding residues include G162, C165, and T168.

Belongs to the peptidase T1B family. HslV subfamily. A double ring-shaped homohexamer of HslV is capped on each side by a ring-shaped HslU homohexamer. The assembly of the HslU/HslV complex is dependent on binding of ATP.

It localises to the cytoplasm. It catalyses the reaction ATP-dependent cleavage of peptide bonds with broad specificity.. Allosterically activated by HslU binding. Its function is as follows. Protease subunit of a proteasome-like degradation complex believed to be a general protein degrading machinery. The chain is ATP-dependent protease subunit HslV from Burkholderia mallei (strain ATCC 23344).